Consider the following 451-residue polypeptide: uncharacterized protein (451 aa).

5 consecutive transmembrane segments (helical) span residues 11-31 (VLLKLIQILFFTISISIYIDL), 56-76 (IQIYYWFVGIILFSIAWSIGT), 151-171 (IIGIQSCLIIFFSTLGFNIYL), 175-195 (FWLIKTIIVDWIISAILLIIF), and 207-227 (VYSVISYIFGSNVLGFGTIKI). The interval 250–300 (TKSNNNNNNNNNNKQDDNIIYDTDSSFNGQSSSSSSSSSSSSSSSSSATTT) is disordered. 2 stretches are compositionally biased toward low complexity: residues 253–262 (NNNNNNNNNN) and 280–300 (SSSSSSSSSSSSSSSSSATTT). The next 2 membrane-spanning stretches (helical) occupy residues 392-412 (FVGVIILWVYTISNFIISDYS) and 413-433 (LLTIPNILVVVGFSGTILTYL).

It localises to the membrane. This is an uncharacterized protein from Dictyostelium discoideum (Social amoeba).